The sequence spans 394 residues: Phosphopentomutase (394 aa).

Positions 14, 287, 292, 328, 329, and 340 each coordinate Mn(2+).

It belongs to the phosphopentomutase family. The cofactor is Mn(2+).

It is found in the cytoplasm. It carries out the reaction 2-deoxy-alpha-D-ribose 1-phosphate = 2-deoxy-D-ribose 5-phosphate. The enzyme catalyses alpha-D-ribose 1-phosphate = D-ribose 5-phosphate. It functions in the pathway carbohydrate degradation; 2-deoxy-D-ribose 1-phosphate degradation; D-glyceraldehyde 3-phosphate and acetaldehyde from 2-deoxy-alpha-D-ribose 1-phosphate: step 1/2. Functionally, isomerase that catalyzes the conversion of deoxy-ribose 1-phosphate (dRib-1-P) and ribose 1-phosphate (Rib-1-P) to deoxy-ribose 5-phosphate (dRib-5-P) and ribose 5-phosphate (Rib-5-P), respectively. The chain is Phosphopentomutase from Shouchella clausii (strain KSM-K16) (Alkalihalobacillus clausii).